Consider the following 141-residue polypeptide: Hemoglobin subunit alpha-D (141 aa).

A Globin domain is found at 1–141; it reads MLGAEETALV…VAAVLAEKYR (141 aa). The heme b site is built by H58 and H87.

It belongs to the globin family. Heterotetramer of two alpha-D chains and two beta chains. As to expression, red blood cells.

In terms of biological role, involved in oxygen transport from the lung to the various peripheral tissues. This chain is Hemoglobin subunit alpha-D (HBAD), found in Phalacrocorax carbo (Great cormorant).